A 113-amino-acid chain; its full sequence is UPF0122 protein Lreu_1156 (113 aa).

Belongs to the UPF0122 family.

Might take part in the signal recognition particle (SRP) pathway. This is inferred from the conservation of its genetic proximity to ftsY/ffh. May be a regulatory protein. This Limosilactobacillus reuteri (strain DSM 20016) (Lactobacillus reuteri) protein is UPF0122 protein Lreu_1156.